Here is a 276-residue protein sequence, read N- to C-terminus: ATP synthase subunit a (276 aa).

The next 6 helical transmembrane spans lie at 47–67 (WHIDSLLFSVGLGVLFLWLFY), 107–127 (IAPLGLTIFVWVFLMNLMDLI), 152–172 (DLNVTLGLALSVFALIVFYSI), 188–208 (PFNHWALIPINFVLETVTLVA), 226–246 (LIFILIALMPWWAQFALSVPW), and 247–267 (AIFHILVIVLQAFIFMMLTIV).

It belongs to the ATPase A chain family. In terms of assembly, F-type ATPases have 2 components, CF(1) - the catalytic core - and CF(0) - the membrane proton channel. CF(1) has five subunits: alpha(3), beta(3), gamma(1), delta(1), epsilon(1). CF(0) has three main subunits: a(1), b(2) and c(9-12). The alpha and beta chains form an alternating ring which encloses part of the gamma chain. CF(1) is attached to CF(0) by a central stalk formed by the gamma and epsilon chains, while a peripheral stalk is formed by the delta and b chains.

Its subcellular location is the cell inner membrane. Its function is as follows. Key component of the proton channel; it plays a direct role in the translocation of protons across the membrane. The protein is ATP synthase subunit a of Shewanella pealeana (strain ATCC 700345 / ANG-SQ1).